The sequence spans 336 residues: Probable RNA methyltransferase Anae109_4379 (336 aa).

The active-site Proton acceptor is Glu-86. Residues 93–322 (FDTHHTVCLS…PIVRRYSGGQ (230 aa)) form the Radical SAM core domain. A disulfide bond links Cys-100 and Cys-328. Cys-107, Cys-111, and Cys-114 together coordinate [4Fe-4S] cluster. S-adenosyl-L-methionine contacts are provided by residues 154-155 (GE), Ser-186, and 209-211 (SLN). Residue Cys-328 is the S-methylcysteine intermediate of the active site.

This sequence belongs to the radical SAM superfamily. RlmN family. The cofactor is [4Fe-4S] cluster.

The protein resides in the cytoplasm. The polypeptide is Probable RNA methyltransferase Anae109_4379 (Anaeromyxobacter sp. (strain Fw109-5)).